The following is a 79-amino-acid chain: MKKLAAVMLTSCLMVAVGASFADEMKKDDMKKDVMMKKDDMAKDEMKKDSMAKDGMKKDAMKKDAMMKKDGMTKDEMKK.

Residues 1–22 (MKKLAAVMLTSCLMVAVGASFA) form the signal peptide. The interval 37–79 (KKDDMAKDEMKKDSMAKDGMKKDAMKKDAMMKKDGMTKDEMKK) is disordered.

In terms of processing, protein is oxidized (possibly on Met residues) when cells are exposed to chlorite or hypochlorite; initially the protein is highly oxidized, by 50 minutes all protein is in the reduced form.

Its subcellular location is the periplasm. Its function is as follows. Serves as an oxidative stress sink, specifically for chlorite and hypochlorite. This is Methionine-rich peptide X from Azospira oryzae (strain ATCC BAA-33 / DSM 13638 / PS) (Dechlorosoma suillum).